The sequence spans 402 residues: NADH-quinone oxidoreductase subunit D (402 aa).

This sequence belongs to the complex I 49 kDa subunit family. In terms of assembly, NDH-1 is composed of 14 different subunits. Subunits NuoB, C, D, E, F, and G constitute the peripheral sector of the complex.

Its subcellular location is the cell inner membrane. The enzyme catalyses a quinone + NADH + 5 H(+)(in) = a quinol + NAD(+) + 4 H(+)(out). Functionally, NDH-1 shuttles electrons from NADH, via FMN and iron-sulfur (Fe-S) centers, to quinones in the respiratory chain. The immediate electron acceptor for the enzyme in this species is believed to be ubiquinone. Couples the redox reaction to proton translocation (for every two electrons transferred, four hydrogen ions are translocated across the cytoplasmic membrane), and thus conserves the redox energy in a proton gradient. The polypeptide is NADH-quinone oxidoreductase subunit D (Rhodopseudomonas palustris (strain ATCC BAA-98 / CGA009)).